The following is a 584-amino-acid chain: Alkaline nuclease (584 aa).

Residues 409 to 430 are disordered; the sequence is GGGADHHLRGSPGDSPPPIPFE.

Belongs to the herpesviridae alkaline nuclease family. As to quaternary structure, interacts with major DNA-binding protein; this interaction increases the nuclease processivity of the alkaline exonuclease.

Its subcellular location is the host nucleus. It is found in the host cytoplasm. Plays a role in processing non linear or branched viral DNA intermediates in order to promote the production of mature packaged unit-length linear progeny viral DNA molecules. Exhibits endonuclease and exonuclease activities and accepts both double-stranded and single-stranded DNA as substrate. Exonuclease digestion of DNA is in the 5'-&gt; 3' direction and the products are 5'-monophosphate nucleosides. Additionally, forms a recombinase with the major DNA-binding protein, which displays strand exchange activity. The polypeptide is Alkaline nuclease (UL98) (Human cytomegalovirus (strain AD169) (HHV-5)).